A 199-amino-acid polypeptide reads, in one-letter code: Protein GrpE (199 aa).

Residues 1–24 show a composition bias toward basic and acidic residues; it reads MSKQNKKDWKKFRDEHKEEHKVEN. The segment at 1–52 is disordered; that stretch reads MSKQNKKDWKKFRDEHKEEHKVENEILEEETDEESQHQEPALGHPSYTALEE.

The protein belongs to the GrpE family. In terms of assembly, homodimer.

It localises to the cytoplasm. Functionally, participates actively in the response to hyperosmotic and heat shock by preventing the aggregation of stress-denatured proteins, in association with DnaK and GrpE. It is the nucleotide exchange factor for DnaK and may function as a thermosensor. Unfolded proteins bind initially to DnaJ; upon interaction with the DnaJ-bound protein, DnaK hydrolyzes its bound ATP, resulting in the formation of a stable complex. GrpE releases ADP from DnaK; ATP binding to DnaK triggers the release of the substrate protein, thus completing the reaction cycle. Several rounds of ATP-dependent interactions between DnaJ, DnaK and GrpE are required for fully efficient folding. This Legionella pneumophila (strain Lens) protein is Protein GrpE.